A 1120-amino-acid chain; its full sequence is DNA-directed RNA polymerase subunit beta (1120 aa).

Belongs to the RNA polymerase beta chain family. In terms of assembly, in plastids the minimal PEP RNA polymerase catalytic core is composed of four subunits: alpha, beta, beta', and beta''. When a (nuclear-encoded) sigma factor is associated with the core the holoenzyme is formed, which can initiate transcription.

It localises to the plastid. It is found in the chloroplast. It carries out the reaction RNA(n) + a ribonucleoside 5'-triphosphate = RNA(n+1) + diphosphate. In terms of biological role, DNA-dependent RNA polymerase catalyzes the transcription of DNA into RNA using the four ribonucleoside triphosphates as substrates. This Gracilaria tenuistipitata var. liui (Red alga) protein is DNA-directed RNA polymerase subunit beta.